The following is a 769-amino-acid chain: Phenylalanine--tRNA ligase beta subunit (769 aa).

Positions G40–D141 constitute a tRNA-binding domain. In terms of domain architecture, B5 spans P389 to P467. Residues D445, D451, E454, and E455 each contribute to the Mg(2+) site. The 93-residue stretch at R676–R768 folds into the FDX-ACB domain.

The protein belongs to the phenylalanyl-tRNA synthetase beta subunit family. Type 1 subfamily. In terms of assembly, tetramer of two alpha and two beta subunits. The cofactor is Mg(2+).

It is found in the cytoplasm. The catalysed reaction is tRNA(Phe) + L-phenylalanine + ATP = L-phenylalanyl-tRNA(Phe) + AMP + diphosphate + H(+). The chain is Phenylalanine--tRNA ligase beta subunit from Solibacter usitatus (strain Ellin6076).